A 411-amino-acid chain; its full sequence is LL-diaminopimelate aminotransferase (411 aa).

2 residues coordinate substrate: Y15 and G42. Pyridoxal 5'-phosphate is bound by residues Y72, 108-109 (AK), Y132, N188, Y219, and 247-249 (SFS). Substrate contacts are provided by K109, Y132, and N188. K250 bears the N6-(pyridoxal phosphate)lysine mark. Pyridoxal 5'-phosphate-binding residues include R258 and N293. Substrate-binding residues include N293 and R389.

The protein belongs to the class-I pyridoxal-phosphate-dependent aminotransferase family. LL-diaminopimelate aminotransferase subfamily. Homodimer. The cofactor is pyridoxal 5'-phosphate.

The catalysed reaction is (2S,6S)-2,6-diaminopimelate + 2-oxoglutarate = (S)-2,3,4,5-tetrahydrodipicolinate + L-glutamate + H2O + H(+). It functions in the pathway amino-acid biosynthesis; L-lysine biosynthesis via DAP pathway; LL-2,6-diaminopimelate from (S)-tetrahydrodipicolinate (aminotransferase route): step 1/1. Functionally, involved in the synthesis of meso-diaminopimelate (m-DAP or DL-DAP), required for both lysine and peptidoglycan biosynthesis. Catalyzes the direct conversion of tetrahydrodipicolinate to LL-diaminopimelate. The protein is LL-diaminopimelate aminotransferase of Desulfitobacterium hafniense (strain Y51).